The sequence spans 173 residues: Putative metal-dependent hydrolase OB0413 (173 aa).

Residues His64, His155, and His159 each coordinate Zn(2+).

This sequence belongs to the metal hydrolase YfiT family. In terms of assembly, homodimer. Zn(2+) serves as cofactor.

It localises to the cytoplasm. In terms of biological role, possible metal-dependent hydrolase. This Oceanobacillus iheyensis (strain DSM 14371 / CIP 107618 / JCM 11309 / KCTC 3954 / HTE831) protein is Putative metal-dependent hydrolase OB0413.